The primary structure comprises 95 residues: uncharacterized protein (95 aa).

A disordered region spans residues 1–73; sequence MAHFKDDLQT…AQQPSMRTEL (73 aa). Composition is skewed to polar residues over residues 42–52 and 62–73; these read SNHSPSVQESP and GSAQQPSMRTEL.

This is an uncharacterized protein from Homo sapiens (Human).